A 654-amino-acid chain; its full sequence is RNA polymerase I-specific transcription initiation factor tif-1A (654 aa).

The segment at 1–37 (MKRSTANAPKLSPKHESESDPKKVKLEEEAKPTVNQA) is disordered. The segment covering 13–31 (PKHESESDPKKVKLEEEAK) has biased composition (basic and acidic residues).

It belongs to the RRN3 family.

The protein resides in the nucleus. It is found in the nucleolus. Its function is as follows. Required for efficient transcription initiation by RNA polymerase I (Pol I). The protein is RNA polymerase I-specific transcription initiation factor tif-1A of Caenorhabditis elegans.